The sequence spans 80 residues: Small ribosomal subunit protein bS16c (80 aa).

The protein belongs to the bacterial ribosomal protein bS16 family.

Its subcellular location is the plastid. The protein localises to the chloroplast. In Lotus japonicus (Lotus corniculatus var. japonicus), this protein is Small ribosomal subunit protein bS16c.